We begin with the raw amino-acid sequence, 478 residues long: Keratin, type II cytoskeletal 8 (478 aa).

Residues 1 to 97 (MSIRVTQKSY…DPNIQAVRTQ (97 aa)) form a head region. Ser9 is modified (phosphoserine; by PKC/PRKCE). A Glycyl lysine isopeptide (Lys-Gly) (interchain with G-Cter in SUMO2) cross-link involves residue Lys11. Ser13, Ser15, Ser21, and Ser22 each carry phosphoserine. Residues 16–44 (APRSFSSRSYTSGPGSRISSSAFSRVGSS) form a disordered region. Arg23 is modified (omega-N-methylarginine). Ser24 bears the Phosphoserine; by PKC/PRKCE mark. Thr26 bears the Phosphothreonine mark. 2 positions are modified to phosphoserine: Ser27 and Ser31. Residue Arg32 is modified to Omega-N-methylarginine. Ser34 and Ser39 each carry phosphoserine. The residue at position 40 (Arg40) is an Omega-N-methylarginine. Residues Ser43 and Ser44 each carry the phosphoserine modification. Asymmetric dimethylarginine; alternate is present on Arg48. An Omega-N-methylarginine; alternate modification is found at Arg48. The residue at position 81 (Ser81) is a Phosphoserine; by MAPK. A coil 1A region spans residues 98–133 (EKEQIKTLNNKFASFIDKVRHLEQQNKVLETKWNLL). The IF rod domain occupies 98 to 409 (EKEQIKTLNN…KLLEGEESRL (312 aa)). At Lys108 the chain carries N6-malonyllysine. Glycyl lysine isopeptide (Lys-Gly) (interchain with G-Cter in SUMO2) cross-links involve residues Lys129 and Lys137. The interval 134–150 (QQQKTARSNIDNMFESY) is linker 1. The segment at 151 to 242 (INNLRRQLET…QLYEEEIREM (92 aa)) is coil 1B. Residue Lys204 forms a Glycyl lysine isopeptide (Lys-Gly) (interchain with G-Cter in SUMO1); alternate linkage. Lys204 is covalently cross-linked (Glycyl lysine isopeptide (Lys-Gly) (interchain with G-Cter in SUMO2); alternate). N6-acetyllysine is present on Lys214. Tyr235 is subject to Phosphotyrosine. Positions 243–266 (QSQISDTSVVLEMDNNRNLDLDGI) are linker 12. A coil 2 region spans residues 267–405 (IAEVKAQYEE…ATYRKLLEGE (139 aa)). Residues 268–389 (AEVKAQYEEI…EYQELMNVKL (122 aa)) are necessary for interaction with PNN. Residue Lys271 forms a Glycyl lysine isopeptide (Lys-Gly) (interchain with G-Cter in SUMO2) linkage. A Phosphoserine modification is found at Ser281. Residue Lys292 forms a Glycyl lysine isopeptide (Lys-Gly) (interchain with G-Cter in SUMO2) linkage. A Glycyl lysine isopeptide (Lys-Gly) (interchain with G-Cter in SUMO2); alternate cross-link involves residue Lys302. Lys302 is subject to N6-acetyllysine; alternate. Lys311 is covalently cross-linked (Glycyl lysine isopeptide (Lys-Gly) (interchain with G-Cter in SUMO2)). A Glycyl lysine isopeptide (Lys-Gly) (interchain with G-Cter in SUMO2); alternate cross-link involves residue Lys332. Position 332 is an N6-acetyllysine; alternate (Lys332). At Ser337 the chain carries Phosphoserine. Lys400 participates in a covalent cross-link: Glycyl lysine isopeptide (Lys-Gly) (interchain with G-Cter in SUMO2). A tail region spans residues 406 to 478 (ESRLESGMQN…VSESSDVLSK (73 aa)). Phosphoserine occurs at positions 407, 411, 417, 424, and 433. Residue Lys467 forms a Glycyl lysine isopeptide (Lys-Gly) (interchain with G-Cter in SUMO1); alternate linkage. Residue Lys467 forms a Glycyl lysine isopeptide (Lys-Gly) (interchain with G-Cter in SUMO2); alternate linkage. Phosphoserine is present on residues Ser470, Ser472, Ser473, and Ser477.

It belongs to the intermediate filament family. Heterotetramer of two type I and two type II keratins. Forms a heterodimer with KRT18. Associates with KRT20. Interacts with PNN. When associated with KRT19, interacts with DMD. Interacts with TCHP. Interacts with APEX1. Interacts with GPER1. Interacts with EPPK1. Interacts with PKP1 and PKP2. In terms of processing, O-glycosylated. O-GlcNAcylation at multiple sites increases solubility, and decreases stability by inducing proteasomal degradation. Post-translationally, O-glycosylated (O-GlcNAcylated), in a cell cycle-dependent manner. As to expression, expressed in bladder, liver, exocervix and (in very low amounts) esophagus.

Its subcellular location is the cytoplasm. The protein localises to the nucleus. It is found in the nucleoplasm. The protein resides in the nucleus matrix. Its function is as follows. Together with KRT19, helps to link the contractile apparatus to dystrophin at the costameres of striated muscle. In Bos taurus (Bovine), this protein is Keratin, type II cytoskeletal 8 (KRT8).